Consider the following 747-residue polypeptide: Kinesin-like protein KIF3B (747 aa).

Methionine 1 is subject to N-acetylmethionine. Position 2 is an N-acetylserine; in Kinesin-like protein KIF3B, N-terminally processed (serine 2). The Kinesin motor domain occupies 9 to 340 (SVRVVVRCRP…LRYANRAKNI (332 aa)). 96–103 (GQTGTGKT) is a binding site for ATP. A coiled-coil region spans residues 346 to 579 (VNEDPKDALL…EQTQNELTRE (234 aa)). Disordered stretches follow at residues 374–412 (IGRRKRREKRREGGGSGGGGEEEEEEGEEGEEDGDDKDD) and 698–747 (IQVD…LVPK). Residues 393 to 411 (GEEEEEEGEEGEEDGDDKD) are compositionally biased toward acidic residues. The interval 580–747 (LKLKHLIIEN…YPQSRGLVPK (168 aa)) is globular. The segment covering 701 to 710 (DASSFESTAS) has biased composition (polar residues). The span at 711–721 (RKPKARPKSGR) shows a compositional bias: basic residues. Residues 722 to 735 (KSGSSSSSSGNPAS) show a composition bias toward low complexity.

Belongs to the TRAFAC class myosin-kinesin ATPase superfamily. Kinesin family. Kinesin II subfamily. As to quaternary structure, heterodimer of KIF3A and KIF3B. KIF3A/KIF3B heterodimer interacts with KIFAP3 forming a heterotrimeric (KIF3A/KIF3B/KIFAP3) complex. Interacts with the SMC3 subunit of the cohesin complex. Interacts directly with IFT20. Interacts with FLCN.

The protein resides in the cytoplasm. The protein localises to the cytoskeleton. It localises to the cell projection. It is found in the cilium. Its subcellular location is the dendritic spine. In terms of biological role, microtubule-based molecular motor that transport intracellular cargos, such as vesicles, organelles and protein complexes. Uses ATP hydrolysis to generate force to bind and move along the microtubule. Plays a role in cilia formation. Involved in photoreceptor integrity and opsin trafficking in rod photoreceptors. Transports vesicles containing N-methyl-D-aspartate (NMDA) receptor subunit GRIN2A into neuronal dendrites. The protein is Kinesin-like protein KIF3B of Mus musculus (Mouse).